A 440-amino-acid polypeptide reads, in one-letter code: Thymidine phosphorylase (440 aa).

This sequence belongs to the thymidine/pyrimidine-nucleoside phosphorylase family. As to quaternary structure, homodimer.

It catalyses the reaction thymidine + phosphate = 2-deoxy-alpha-D-ribose 1-phosphate + thymine. It participates in pyrimidine metabolism; dTMP biosynthesis via salvage pathway; dTMP from thymine: step 1/2. Its function is as follows. The enzymes which catalyze the reversible phosphorolysis of pyrimidine nucleosides are involved in the degradation of these compounds and in their utilization as carbon and energy sources, or in the rescue of pyrimidine bases for nucleotide synthesis. The sequence is that of Thymidine phosphorylase from Escherichia coli O127:H6 (strain E2348/69 / EPEC).